A 1360-amino-acid chain; its full sequence is MAVQNRNSVLILSGRERGARMLGSQRLLQQLVEDRTRWMKWQSQKVELPDNPRSTFLLAFSPDRNLVASTHVNHNIYITDVKTGKCLHSLVGHRRTPWCVTFHPTIPGLVASGCLDGEVRIWDLHGGSESWFTESNVAIASLAFHPTAQLLLIATNNELHFWDWSRPEPFAVVKTASETERVRLVRFDPLGHNLLTAIVNPSNQQNEDDSEVPMDSMEMALFRQRSLLRSPPVRRTPILHNFLHILSSRSSGAQANDQSRPAPEPREPPSIPRFQYPVRTEPADRPALQGCTQHLGLGCLCSRCAASRNLFTQNPTGLQPSDSTQPQTQSGPSAFSPAPSQTRTSDRPSAFSSVFSGTAGNSAHRGLLPLRTIDPLGSQVPSHLEAPGRLPGADWSGSLLSTGHEHGLGAIGVETSSGRGVVPPPRTSSSSMDLLSLRRFPDGSSSSPIYTSATEGRGLVLPGTEPNRGRPNDGTSSGHHPFYDNTQRNNPASIRNVLQCNLSRYFMEYERMQELERPGGSREVAGGPGPMQELLTSSMDAERPGPSHNGSSHTGNGGAVATPSQNHPNRCRSCHNLLTFNHDTQRWERSGQTSSSSSSQEGPSWPLSVPPFEDPGQTARVEAQAPEMRPMELGEASSGLQGQQPMGLVYNQETGQWESVYRQPTVSASSEAAEDALNPEVPVDNPDEDSLRRRLLESSLFPFSRYDMSSSRDHPIYPDPARLSPAAYYAQRMIQYLSRRESIRQRSLQNRLRTLSNSQADSQSNNPSSVPPEASDGDYEDIEEPGDRTRHRMPRNARMSAPSLGRFVPRRFLLPEYLPYAGLFHERGQSGLATHSSINRVLAGASIGDGQSAVASNIANTTYRLQWWDFTKFDLPEISNATVNVLVPHCKIYNDASCDISADGQLLAVFIPSSQRGFADEGILAVYSLAPHNLGEMLYTKRFGPNAISVSLSPMGCYVMVGLASRRILLHPTTDHMVAQVFRLQQPHGGETSIRMMFNVVYPMAPDQRRHVSINSARWLPEPGMGLAYGTNKGDLVICRPVDFRSDGDNPSDLNADSLFTINSSSRTRGVERPGTSRSGWRFDRDMGLMNAIGLQPRQAAPSVTSQGTQTPVVRLQNAETQTERELPSASTFQNTHTTSRHTVQTASTSTERHTHPEMTHTLVQASVSEGSLNRTNLPATYHVESAAEPGTGEDALSRIRRLMAEGGMTAVVQRERSTTMASMGGFGNNIVVSHRIHRGSQTSVRTAQGGNPTPEMPAGLGVSTLFHTEPLVDSLEAPGPSGSSGAPLPTPFTNRSEFAGVSPMVESDLFGDRQPDDVQRRPSRGGLNMSNHSNNNNNDHSNSYSESRSRDYPDDLYGR.

3 WD repeats span residues 50 to 89 (DNPRSTFLLAFSPDRNLVASTHVNHNIYITDVKTGKCLHS), 92 to 132 (GHRR…ESWF), and 134 to 174 (ESNV…AVVK). Residues 249-258 (RSSGAQANDQ) show a composition bias toward polar residues. Disordered stretches follow at residues 249-277 (RSSGAQANDQSRPAPEPREPPSIPRFQYP), 315-364 (PTGL…NSAH), 412-490 (GVET…QRNN), 514-573 (ELER…RCRS), 587-616 (WERSGQTSSSSSSQEGPSWPLSVPPFEDPG), 664-688 (PTVSASSEAAEDALNPEVPVDNPDE), and 754-796 (TLSN…MPRN). Residues 319-333 (QPSDSTQPQTQSGPS) are compositionally biased toward low complexity. Polar residues predominate over residues 350-361 (AFSSVFSGTAGN). Over residues 428 to 437 (SSSSMDLLSL) the composition is skewed to low complexity. 2 stretches are compositionally biased toward polar residues: residues 443–454 (GSSSSPIYTSAT) and 473–490 (DGTSSGHHPFYDNTQRNN). The segment covering 590 to 607 (SGQTSSSSSSQEGPSWPL) has biased composition (low complexity). Positions 754 to 768 (TLSNSQADSQSNNPS) are enriched in polar residues. Over residues 775–784 (SDGDYEDIEE) the composition is skewed to acidic residues. Short sequence motifs (TQT motif) lie at residues 1109–1111 (TQT) and 1121–1123 (TQT). 2 disordered regions span residues 1120-1142 (ETQTERELPSASTFQNTHTTSRH) and 1241-1360 (SQTS…LYGR). Polar residues-rich tracts occupy residues 1129 to 1142 (SASTFQNTHTTSRH) and 1241 to 1252 (SQTSVRTAQGGN). Positions 1278–1288 (APGPSGSSGAP) are enriched in low complexity. Basic and acidic residues predominate over residues 1311–1321 (FGDRQPDDVQR). Over residues 1329 to 1347 (NMSNHSNNNNNDHSNSYSE) the composition is skewed to low complexity. Residues 1348-1360 (SRSRDYPDDLYGR) show a composition bias toward basic and acidic residues.

This sequence belongs to the WD repeat AMBRA1 family. Component of the DCX(AMBRA1) E3 ubiquitin ligase complex.

Its subcellular location is the endoplasmic reticulum. The protein localises to the cytoplasm. It is found in the cytoskeleton. The protein resides in the cytoplasmic vesicle. It localises to the autophagosome. Its subcellular location is the mitochondrion. The protein localises to the cytosol. It is found in the nucleus. The protein resides in the cell junction. It localises to the focal adhesion. The protein operates within protein modification; protein ubiquitination. Functionally, substrate-recognition component of a DCX (DDB1-CUL4-X-box) E3 ubiquitin-protein ligase complex involved in cell cycle control and autophagy. The DCX(AMBRA1) complex specifically mediates the polyubiquitination of target proteins. Acts as an upstream master regulator of the transition from G1 to S cell phase: ambra1b specifically recognizes and binds phosphorylated cyclin-D (ccnd1, ccnd2 and ccnd3), leading to cyclin-D ubiquitination by the DCX(AMBRA1) complex and subsequent degradation. Acts as a regulator of Cul5-RING (CRL5) E3 ubiquitin-protein ligase complexes by mediating ubiquitination and degradation of Elongin-C (eloc) component of CRL5 complexes. Acts as a key regulator of autophagy by modulating the BECN1-PIK3C3 complex: controls protein turnover during neuronal development, and regulates normal cell survival and proliferation. In normal conditions, ambra1b is tethered to the cytoskeleton via interaction with dyneins light chains. Upon autophagy induction, ambra1b is released from the cytoskeletal docking site to induce autophagosome nucleation by mediating ubiquitination of proteins involved in autophagy. Also acts as an activator of mitophagy. Required for skeletal muscle development. This Danio rerio (Zebrafish) protein is Activating molecule in BECN1-regulated autophagy protein 1B.